Consider the following 131-residue polypeptide: Small ribosomal subunit protein uS11 (131 aa).

The protein belongs to the universal ribosomal protein uS11 family. In terms of assembly, part of the 30S ribosomal subunit. Interacts with proteins S7 and S18. Binds to IF-3.

Its function is as follows. Located on the platform of the 30S subunit, it bridges several disparate RNA helices of the 16S rRNA. Forms part of the Shine-Dalgarno cleft in the 70S ribosome. This Clostridium novyi (strain NT) protein is Small ribosomal subunit protein uS11.